A 429-amino-acid polypeptide reads, in one-letter code: Z-DNA-binding protein 1 (429 aa).

2 Z-binding domains span residues 8–70 (PGRE…CLGG) and 103–166 (PQFS…TIYR). Residues 68-107 (LGGTDPEGEGPAELALSSPAERPQQHAATIPETPGPQFSQ) form a disordered region. Short sequence motifs (RIP homotypic interaction motif (RHIM)) lie at residues 195–219 (NSWISIANSEAIQIGHGNIITRQTV) and 253–277 (DIHMEQSILRRVQLGHSNEMRLHGV). Disordered regions lie at residues 277–299 (VPSEGPAHIPPGSPPVSATAAGP) and 339–429 (KMSI…GGGI). The span at 347–358 (AGPGGVAGSGEG) shows a compositional bias: gly residues. Residues 407 to 420 (KAAEGSHYVDEASH) are compositionally biased toward basic and acidic residues.

In terms of assembly, homodimer. Interacts (via RIP homotypic interaction motif) with RIPK3; leading to RIPK3 activation and necroptosis; interaction is enhanced by CASP6. Interacts (via RIP homotypic interaction motif) with RIPK1. Component of the AIM2 PANoptosome complex, a multiprotein complex that drives inflammatory cell death (PANoptosis). As to quaternary structure, (Microbial infection) Interacts (via RIP homotypic interaction motif/RHIM) with herpes simplex virus 1/HHV-1 protein RIR1/ICP6 (via RHIM); this interaction may induce heteromeric amyloid assemblies and prevent necroptosis activation. Interacts with human herpes simplex virus 1/HHV-1 protein ICP0. Phosphorylated. As to expression, highly expressed in lymphatic tissues including lymph node, leukocytes, tonsil, bone marrow and spleen. Expressed to a lesser extent in thymus, lung and liver.

The protein localises to the cytoplasm. It is found in the nucleus. ZBP1-dependent necroptosis is normally inhibited by RIPK1: RIPK1 inhibits the ZBP1-induced activation of RIPK3 via FADD-mediated recruitment of CASP8, which cleaves RIPK1 and limits TNF-induced necroptosis. Its function is as follows. Key innate sensor that recognizes and binds Z-RNA structures, which are produced by a number of viruses, such as herpesvirus, orthomyxovirus or flavivirus, and triggers different forms of cell death. ZBP1 acts as an essential mediator of pyroptosis, necroptosis and apoptosis (PANoptosis), an integral part of host defense against pathogens, by activating RIPK3, caspase-8 (CASP8), and the NLRP3 inflammasome. Key activator of necroptosis, a programmed cell death process in response to death-inducing TNF-alpha family members, via its ability to bind Z-RNA: once activated upon Z-RNA-binding, ZBP1 interacts and stimulates RIPK3 kinase, which phosphorylates and activates MLKL, triggering execution of programmed necrosis. In addition to TNF-induced necroptosis, necroptosis can also take place in the nucleus in response to orthomyxoviruses infection: ZBP1 recognizes and binds Z-RNA structures that are produced in infected nuclei by orthomyxoviruses, such as the influenza A virus (IAV), leading to ZBP1 activation, RIPK3 stimulation and subsequent MLKL phosphorylation, triggering disruption of the nuclear envelope and leakage of cellular DNA into the cytosol. ZBP1-dependent cell death in response to IAV infection promotes interleukin-1 alpha (IL1A) induction in an NLRP3-inflammasome-independent manner: IL1A expression is required for the optimal interleukin-1 beta (IL1B) production, and together, these cytokines promote infiltration of inflammatory neutrophils to the lung, leading to the formation of neutrophil extracellular traps. In addition to its direct role in driving necroptosis via its ability to sense Z-RNAs, also involved in PANoptosis triggered in response to bacterial infection: component of the AIM2 PANoptosome complex, a multiprotein complex that triggers PANoptosis. Also acts as the apical sensor of fungal infection responsible for activating PANoptosis. Involved in CASP8-mediated cell death via its interaction with RIPK1 but independently of its ability to sense Z-RNAs. In some cell types, also able to restrict viral replication by promoting cell death-independent responses. In response to Zika virus infection in neurons, promotes a cell death-independent pathway that restricts viral replication: together with RIPK3, promotes a death-independent transcriptional program that modifies the cellular metabolism via up-regulation expression of the enzyme ACOD1/IRG1 and production of the metabolite itaconate. Itaconate inhibits the activity of succinate dehydrogenase, generating a metabolic state in neurons that suppresses replication of viral genomes. In terms of biological role, (Microbial infection) In case of herpes simplex virus 1/HHV-1 infection, forms hetero-amyloid structures with HHV-1 protein RIR1/ICP6 which may inhibit ZBP1-mediated necroptosis, thereby preventing host cell death pathway and allowing viral evasion. In Homo sapiens (Human), this protein is Z-DNA-binding protein 1.